The following is a 320-amino-acid chain: Mitochondrial glutamate carrier 2 (320 aa).

Solcar repeat units follow at residues 11-97, 105-215, and 224-313; these read LSIS…LRQL, RNLK…LNQL, and ASFT…GIGE. Helical transmembrane passes span 17-37, 66-86, and 110-128; these read LINGGIAGLVGVTCVFPIDLA, FLGMYRGAAVNLTLVTPEKAI, and EMLAGCGAGICQVVITCPM. Serine 150 is modified (phosphoserine). 3 helical membrane passes run 190 to 210, 230 to 250, and 293 to 313; these read GLGATLLRDIPFSIIYFPLFA, FVAGCTAGSVAAVAVTPLDVL, and ALVIAPLFGIAQGVYFIGIGE.

It belongs to the mitochondrial carrier (TC 2.A.29) family.

It localises to the mitochondrion inner membrane. The catalysed reaction is L-glutamate(in) + H(+)(in) = L-glutamate(out) + H(+)(out). In terms of biological role, responsible for the transport of glutamate from the cytosol into the mitochondrial matrix with the concomitant import of a proton (symport system). This chain is Mitochondrial glutamate carrier 2 (Slc25a18), found in Mus musculus (Mouse).